The primary structure comprises 211 residues: Large ribosomal subunit protein uL4 (211 aa).

The tract at residues 44–90 is disordered; sequence ERQGTHSTLTKGEVRGGGKKPWRQKHTGKARTGSTRNPHWTGGGVVF. Residues 60 to 72 are compositionally biased toward basic residues; it reads GGKKPWRQKHTGK.

It belongs to the universal ribosomal protein uL4 family. As to quaternary structure, part of the 50S ribosomal subunit.

Its function is as follows. One of the primary rRNA binding proteins, this protein initially binds near the 5'-end of the 23S rRNA. It is important during the early stages of 50S assembly. It makes multiple contacts with different domains of the 23S rRNA in the assembled 50S subunit and ribosome. In terms of biological role, forms part of the polypeptide exit tunnel. In Ureaplasma parvum serovar 3 (strain ATCC 27815 / 27 / NCTC 11736), this protein is Large ribosomal subunit protein uL4.